We begin with the raw amino-acid sequence, 285 residues long: Protein unc-1 (285 aa).

2 helical membrane-spanning segments follow: residues 27 to 47 and 69 to 89; these read IGTI…IVTF and IGRL…IPCI.

It belongs to the band 7/mec-2 family.

The protein resides in the cell membrane. It is found in the cell junction. The protein localises to the gap junction. The sequence is that of Protein unc-1 (unc-1) from Caenorhabditis elegans.